The sequence spans 415 residues: Translation initiation factor 2 subunit gamma (415 aa).

The 200-residue stretch at 7–206 (QPEVNIGVVG…GIEEYIKTPY (200 aa)) folds into the tr-type G domain. The tract at residues 16-23 (GHVDHGKT) is G1. Mg(2+) is bound by residues D19, T23, G44, and T46. 19–24 (DHGKTT) lines the GTP pocket. The G2 stretch occupies residues 44-48 (GMTIK). Residues C59, C62, C74, and C77 each contribute to the Zn(2+) site. The interval 93 to 96 (DAPG) is G3. GTP-binding positions include 149–152 (NKVD) and 184–186 (SAL). The G4 stretch occupies residues 149 to 152 (NKVD). The G5 stretch occupies residues 184-186 (SAL).

Belongs to the TRAFAC class translation factor GTPase superfamily. Classic translation factor GTPase family. EIF2G subfamily. In terms of assembly, heterotrimer composed of an alpha, a beta and a gamma chain. Requires Mg(2+) as cofactor.

It catalyses the reaction GTP + H2O = GDP + phosphate + H(+). Functionally, eIF-2 functions in the early steps of protein synthesis by forming a ternary complex with GTP and initiator tRNA. In Saccharolobus solfataricus (strain ATCC 35092 / DSM 1617 / JCM 11322 / P2) (Sulfolobus solfataricus), this protein is Translation initiation factor 2 subunit gamma.